Here is a 373-residue protein sequence, read N- to C-terminus: Spermidine/putrescine import ATP-binding protein PotA (373 aa).

The region spanning 8–238 (FELRGVSKYF…PANLYVARFV (231 aa)) is the ABC transporter domain. An ATP-binding site is contributed by 40–47 (GPSGCGKT).

The protein belongs to the ABC transporter superfamily. Spermidine/putrescine importer (TC 3.A.1.11.1) family. In terms of assembly, the complex is composed of two ATP-binding proteins (PotA), two transmembrane proteins (PotB and PotC) and a solute-binding protein (PotD).

The protein resides in the cell inner membrane. It carries out the reaction ATP + H2O + polyamine-[polyamine-binding protein]Side 1 = ADP + phosphate + polyamineSide 2 + [polyamine-binding protein]Side 1.. Functionally, part of the ABC transporter complex PotABCD involved in spermidine/putrescine import. Responsible for energy coupling to the transport system. The protein is Spermidine/putrescine import ATP-binding protein PotA of Oleidesulfovibrio alaskensis (strain ATCC BAA-1058 / DSM 17464 / G20) (Desulfovibrio alaskensis).